Consider the following 308-residue polypeptide: Acyltransferase drtE (308 aa).

The 125-residue stretch at 35–159 (PALVMNPGYN…AAEAKDNFSR (125 aa)) folds into the AB hydrolase-1 domain.

Belongs to the polyketide transferase af380 family.

It participates in secondary metabolite biosynthesis; terpenoid biosynthesis. Its function is as follows. Acyltransferase; part of the gene cluster that mediates the biosynthesis of various drimane-type sesquiterpene esters, compounds that exhibit diverse biological activities and are widely present in eukaryotes. The pathway begins with the synthesis of the backbone drimenol by the terpene cyclase drtB using farnesyl pyrophosphate (FPP) as substrate. The cytochrome P450 monooxygenase drtD is then responsible for the hydroxylations at C-6, C-9 and C-12, as well as the oxidation of hydroxyl groups at C-6 and C-11 to a ketone and an aldehyde, respectively. Then, the biosynthesis can go in two directions, either the hydroxylated drimenol is further hydroxylated at C-2 and C-3 by an enzyme(s) not associated with the drt cluster, or the FAD-binding oxidoreductase drtC further oxidizes C-11 or C-12 to form the butyrolactone ring. DrtB, drtD and drtC are solely responsible for the formation of the different drimane structures observed during drimane sesquiterpenes biosynthesis. The polyketide synthase drtA synthesizes different lengths (C6 and C8) of PKS chains, which are then oxidized to varying degrees by the short-chain dehydrogenase drtF. Finally, these PKS chains are transferred onto drimane sesquiterpenes by the acyltransferase drtE, forming the sesquiterpene esters. In addition to the different fatty acyl-CoA chains produced by drtA, drtE is also able to use cinnamoyl-CoA as a substrate. This is Acyltransferase drtE from Aspergillus calidoustus.